The sequence spans 309 residues: MTIPAFHPGELNVYSAPGDVADVSRALRLTGRRVMLVPTMGALHEGHLALVRAAKRVPGSVVVVSIFVNPMQFGAGEDLDAYPRTPDDDLAQLRAEGVEIAFTPTTAAMYPDGLRTTVQPGPLAAELEGGPRPTHFAGVLTVVLKLLQIVRPDRVFFGEKDYQQLVLIRQLVADFNLDVAVVGVPTVREADGLAMSSRNRYLDPAQRAAAVALSAALTAAAHAATAGAQAALDAARAVLDAAPGVAVDYLELRDIGLGPMPLNGSGRLLVAARLGTTRLLDNIAIEIGTFAGTDRPDGYRAILESHWRN.

Residue Thr-2 is modified to N-acetylthreonine. Residue 40 to 47 coordinates ATP; the sequence is MGALHEGH. Catalysis depends on His-47, which acts as the Proton donor. Gln-72 contributes to the (R)-pantoate binding site. Position 72 (Gln-72) interacts with beta-alanine. Mg(2+)-binding residues include Asp-88, Asp-89, and Gln-92. 158-161 contributes to the ATP binding site; the sequence is GEKD. Gln-164 is a (R)-pantoate binding site. ATP contacts are provided by residues Val-187 and 195 to 198; that span reads MSSR.

The protein belongs to the pantothenate synthetase family.

The protein localises to the cytoplasm. The enzyme catalyses (R)-pantoate + beta-alanine + ATP = (R)-pantothenate + AMP + diphosphate + H(+). It functions in the pathway cofactor biosynthesis; (R)-pantothenate biosynthesis; (R)-pantothenate from (R)-pantoate and beta-alanine: step 1/1. Its activity is regulated as follows. Pantothenate exhibits uncompetitive inhibition toward both D-pantoate and ATP, and non-competitive inhibition toward beta-alanine. AMPCPP exhibits competitive inhibition toward ATP, uncompetitive inhibition toward beta-alanine, and non-competitive inhibition toward D-pantoate. The enzyme is most active in the presence of magnesium or manganese. Other divalent cations (cobalt, nickel, zinc) are less effective. Functionally, catalyzes the condensation of pantoate with beta-alanine in an ATP-dependent reaction via a pantoyl-adenylate intermediate. In Mycobacterium tuberculosis (strain ATCC 25618 / H37Rv), this protein is Pantothenate synthetase (panC).